A 473-amino-acid chain; its full sequence is Bifunctional protein GlmU (473 aa).

The pyrophosphorylase stretch occupies residues 1 to 241; it reads MATQPTPLTA…VGSLVGINDR (241 aa). UDP-N-acetyl-alpha-D-glucosamine contacts are provided by residues 13 to 16, K27, Q84, and 89 to 90; these read LAAG and GT. D114 contributes to the Mg(2+) binding site. Residues G152, E167, N182, and N239 each coordinate UDP-N-acetyl-alpha-D-glucosamine. N239 contacts Mg(2+). The tract at residues 242–262 is linker; it reads AQLAAAEEVLYGRIADRLRKS. Residues 263–473 are N-acetyltransferase; the sequence is GVTIRTSARI…KARLKDAAKK (211 aa). Positions 343 and 361 each coordinate UDP-N-acetyl-alpha-D-glucosamine. Catalysis depends on H373, which acts as the Proton acceptor. The UDP-N-acetyl-alpha-D-glucosamine site is built by Y376 and N387. Residues A390, 396 to 397, S415, T433, and R450 contribute to the acetyl-CoA site; that span reads NY.

The protein in the N-terminal section; belongs to the N-acetylglucosamine-1-phosphate uridyltransferase family. In the C-terminal section; belongs to the transferase hexapeptide repeat family. Homotrimer. It depends on Mg(2+) as a cofactor.

The protein resides in the cytoplasm. It carries out the reaction alpha-D-glucosamine 1-phosphate + acetyl-CoA = N-acetyl-alpha-D-glucosamine 1-phosphate + CoA + H(+). It catalyses the reaction N-acetyl-alpha-D-glucosamine 1-phosphate + UTP + H(+) = UDP-N-acetyl-alpha-D-glucosamine + diphosphate. Its pathway is nucleotide-sugar biosynthesis; UDP-N-acetyl-alpha-D-glucosamine biosynthesis; N-acetyl-alpha-D-glucosamine 1-phosphate from alpha-D-glucosamine 6-phosphate (route II): step 2/2. The protein operates within nucleotide-sugar biosynthesis; UDP-N-acetyl-alpha-D-glucosamine biosynthesis; UDP-N-acetyl-alpha-D-glucosamine from N-acetyl-alpha-D-glucosamine 1-phosphate: step 1/1. It functions in the pathway bacterial outer membrane biogenesis; LPS lipid A biosynthesis. Functionally, catalyzes the last two sequential reactions in the de novo biosynthetic pathway for UDP-N-acetylglucosamine (UDP-GlcNAc). The C-terminal domain catalyzes the transfer of acetyl group from acetyl coenzyme A to glucosamine-1-phosphate (GlcN-1-P) to produce N-acetylglucosamine-1-phosphate (GlcNAc-1-P), which is converted into UDP-GlcNAc by the transfer of uridine 5-monophosphate (from uridine 5-triphosphate), a reaction catalyzed by the N-terminal domain. The sequence is that of Bifunctional protein GlmU from Sorangium cellulosum (strain So ce56) (Polyangium cellulosum (strain So ce56)).